A 732-amino-acid polypeptide reads, in one-letter code: Phosphoribosylformylglycinamidine synthase subunit PurL (732 aa).

The active site involves H32. Position 35 (Y35) interacts with ATP. E81 contributes to the Mg(2+) binding site. Residues 82–85 and R104 each bind substrate; that span reads SHNH. H83 serves as the catalytic Proton acceptor. D105 is a Mg(2+) binding site. Q230 provides a ligand contact to substrate. D258 contributes to the Mg(2+) binding site. Position 302-304 (302-304) interacts with substrate; that stretch reads ESQ. ATP-binding residues include D485 and G522. N523 is a binding site for Mg(2+). S525 contacts substrate.

It belongs to the FGAMS family. Monomer. Part of the FGAM synthase complex composed of 1 PurL, 1 PurQ and 2 PurS subunits.

It is found in the cytoplasm. It carries out the reaction N(2)-formyl-N(1)-(5-phospho-beta-D-ribosyl)glycinamide + L-glutamine + ATP + H2O = 2-formamido-N(1)-(5-O-phospho-beta-D-ribosyl)acetamidine + L-glutamate + ADP + phosphate + H(+). The protein operates within purine metabolism; IMP biosynthesis via de novo pathway; 5-amino-1-(5-phospho-D-ribosyl)imidazole from N(2)-formyl-N(1)-(5-phospho-D-ribosyl)glycinamide: step 1/2. Its function is as follows. Part of the phosphoribosylformylglycinamidine synthase complex involved in the purines biosynthetic pathway. Catalyzes the ATP-dependent conversion of formylglycinamide ribonucleotide (FGAR) and glutamine to yield formylglycinamidine ribonucleotide (FGAM) and glutamate. The FGAM synthase complex is composed of three subunits. PurQ produces an ammonia molecule by converting glutamine to glutamate. PurL transfers the ammonia molecule to FGAR to form FGAM in an ATP-dependent manner. PurS interacts with PurQ and PurL and is thought to assist in the transfer of the ammonia molecule from PurQ to PurL. The polypeptide is Phosphoribosylformylglycinamidine synthase subunit PurL (Methanococcus aeolicus (strain ATCC BAA-1280 / DSM 17508 / OCM 812 / Nankai-3)).